The following is a 538-amino-acid chain: MGNCCGTPATAEEGGKRRRRGKQKKANPFTVAYNRAPSSAGAAAGRPGLMVLRDPTGRDLGARYELGGELGRGEFGITYLCTEAETGDRYACKSISKRKLRTPVDVEDVRREVEIMRHMPSHPNIVSLRAAYEDEDNVHLVMELCEGGELFDRIVARGHYTERAAAAVTRTIVEVVQMCHRHGVMHRDLKPENFLYANKKDSSPLKAIDFGLSVFFRPGERFTEIVGSPYYMAPEVLKRHYGPEVDVWSAGVILYILLCGVPPFWAETEQGVAQAIIRSVVDFKREPWPRVSEPAKDLVKRMLDPNPMTRLTAEQVLEHPWLHDSKKMPDIPLGDAVRARLQQFAAMNKLKKKALKVIAEHLSAEEAADIKDMFDKMDVSKNGQLTFEDFKAGIRKLGNQMPDSDLKILMDAADIDKNGILDYQEFVAVSIHVRKIGNDEHIQKAFSYFDQNKSGYIEIEELREALVDEIDGNDEDIINSIIRDVDTDKDGKISYDEFAVMMKAGTDWRKASRQYSRQRFSNLSLKLQKDGSISDDTQ.

The segment at 1-26 (MGNCCGTPATAEEGGKRRRRGKQKKA) is disordered. Residue Gly-2 is the site of N-myristoyl glycine attachment. Over residues 16–25 (KRRRRGKQKK) the composition is skewed to basic residues. Residues 64–322 (YELGGELGRG…AEQVLEHPWL (259 aa)) enclose the Protein kinase domain. ATP-binding positions include 70 to 78 (LGRGEFGIT) and Lys-93. Residue Asp-188 is the Proton acceptor of the active site. The tract at residues 328–358 (MPDIPLGDAVRARLQQFAAMNKLKKKALKVI) is autoinhibitory domain. 4 EF-hand domains span residues 365–400 (EEAADIKDMFDKMDVSKNGQLTFEDFKAGIRKLGNQ), 401–436 (MPDSDLKILMDAADIDKNGILDYQEFVAVSIHVRKI), 437–472 (GNDEHIQKAFSYFDQNKSGYIEIEELREALVDEIDG), and 473–508 (NDEDIINSIIRDVDTDKDGKISYDEFAVMMKAGTDW). Residues Asp-378, Ser-380, Asn-382, Gln-384, Asp-389, Asp-414, Asp-416, Asn-418, Glu-425, Asp-450, Asn-452, Ser-454, Tyr-456, Glu-461, Asp-486, Asp-488, Asp-490, Lys-492, and Glu-497 each contribute to the Ca(2+) site.

This sequence belongs to the protein kinase superfamily. Ser/Thr protein kinase family. CDPK subfamily.

It is found in the membrane. The enzyme catalyses L-seryl-[protein] + ATP = O-phospho-L-seryl-[protein] + ADP + H(+). It carries out the reaction L-threonyl-[protein] + ATP = O-phospho-L-threonyl-[protein] + ADP + H(+). Its activity is regulated as follows. Activated by calcium. Autophosphorylation may play an important role in the regulation of the kinase activity. Functionally, may play a role in signal transduction pathways that involve calcium as a second messenger. This is Calcium-dependent protein kinase 8 from Oryza sativa subsp. japonica (Rice).